The chain runs to 114 residues: Iron-sulfur cluster insertion protein ErpA (114 aa).

3 residues coordinate iron-sulfur cluster: C42, C106, and C108.

The protein belongs to the HesB/IscA family. Homodimer. Requires iron-sulfur cluster as cofactor.

Functionally, required for insertion of 4Fe-4S clusters for at least IspG. This is Iron-sulfur cluster insertion protein ErpA from Citrobacter koseri (strain ATCC BAA-895 / CDC 4225-83 / SGSC4696).